The following is a 439-amino-acid chain: Alpha-1,3-mannosyl-glycoprotein 4-beta-N-acetylglucosaminyltransferase-like protein MGAT4E (439 aa).

It functions in the pathway protein modification; protein glycosylation. In terms of biological role, glycosyltransferase-like protein that may participate in the transfer of N-acetylglucosamine (GlcNAc) to the core mannose residues of N-linked glycans. This chain is Alpha-1,3-mannosyl-glycoprotein 4-beta-N-acetylglucosaminyltransferase-like protein MGAT4E, found in Mus musculus (Mouse).